The chain runs to 202 residues: NAD(P)H-quinone oxidoreductase chain 6 (202 aa).

The next 5 helical transmembrane spans lie at 9 to 29 (VVSF…VVLA), 32 to 52 (IVYS…MYLL), 61 to 81 (AQVL…IMLV), 98 to 118 (VLTA…VLAT), and 144 to 164 (FLLP…GAII).

This sequence belongs to the complex I subunit 6 family.

The protein localises to the membrane. The enzyme catalyses a plastoquinone + NADH + (n+1) H(+)(in) = a plastoquinol + NAD(+) + n H(+)(out). It catalyses the reaction a plastoquinone + NADPH + (n+1) H(+)(in) = a plastoquinol + NADP(+) + n H(+)(out). Functionally, NDH-1 shuttles electrons from NAD(P)H, via FMN and iron-sulfur (Fe-S) centers, to quinones in the respiratory chain. The immediate electron acceptor for the enzyme in this species is believed to be plastoquinone. Couples the redox reaction to proton translocation (for every two electrons transferred, four hydrogen ions are translocated across the cytoplasmic membrane), and thus conserves the redox energy in a proton gradient. The protein is NAD(P)H-quinone oxidoreductase chain 6 (ndhG) of Nostoc sp. (strain PCC 7120 / SAG 25.82 / UTEX 2576).